Reading from the N-terminus, the 450-residue chain is Sulfide:quinone oxidoreductase, mitochondrial (450 aa).

FAD contacts are provided by residues 53 to 54 (SG), Glu-75, Gln-83, and Val-118. Position 173 is an N6-acetyllysine (Lys-173). Cys-201 (cysteine persulfide intermediate) is an active-site residue. A disulfide bond links Cys-201 and Cys-379. An FAD-binding site is contributed by Asp-336. A Phosphoserine modification is found at Ser-343. 344 to 347 (KTAA) provides a ligand contact to FAD. The active-site Cysteine persulfide intermediate is the Cys-379.

The protein belongs to the SQRD family. The cofactor is FAD.

It localises to the mitochondrion. The enzyme catalyses ubiquinone-10 + hydrogen sulfide + sulfite + 2 H(+) = ubiquinol-10 + thiosulfate. It catalyses the reaction a quinone + hydrogen sulfide + glutathione + H(+) = S-sulfanylglutathione + a quinol. It carries out the reaction ubiquinone-10 + hydrogen sulfide + glutathione + H(+) = S-sulfanylglutathione + ubiquinol-10. In terms of biological role, catalyzes the oxidation of hydrogen sulfide with the help of a quinone, such as ubiquinone-10, giving rise to thiosulfate and ultimately to sulfane (molecular sulfur) atoms. Requires an additional electron acceptor; can use sulfite, sulfide or cyanide (in vitro). It is believed the in vivo electron acceptor is glutathione. This Homo sapiens (Human) protein is Sulfide:quinone oxidoreductase, mitochondrial.